Consider the following 522-residue polypeptide: uncharacterized protein (522 aa).

This is an uncharacterized protein from Sinorhizobium fredii (strain NBRC 101917 / NGR234).